Consider the following 430-residue polypeptide: 3-oxo-tetronate kinase (430 aa).

Residues S268, 366-369 (GGET), and G410 contribute to the ATP site.

It belongs to the four-carbon acid sugar kinase family.

It catalyses the reaction 3-dehydro-L-erythronate + ATP = 3-dehydro-4-O-phospho-L-erythronate + ADP + H(+). The enzyme catalyses 3-dehydro-D-erythronate + ATP = 3-dehydro-4-O-phospho-D-erythronate + ADP + H(+). Catalyzes the ATP-dependent phosphorylation of 3-oxo-tetronate to 3-oxo-tetronate 4-phosphate. The protein is 3-oxo-tetronate kinase of Pseudomonas fluorescens (strain ATCC BAA-477 / NRRL B-23932 / Pf-5).